The primary structure comprises 524 residues: Leucine-rich repeat-containing protein 1 (524 aa).

LRR repeat units lie at residues 11–34 (NRHV…IYRY), 35–58 (ARSL…FFQL), 60–81 (KLRK…IANF), 83–105 (QLVE…SFCK), 107–126 (LQVA…SFPE), 127–149 (LQNL…NIGN), 150–172 (LYNL…SLTQ), 173–196 (LRRL…IGAL), 198–218 (HLKD…EIGN), 219–242 (LKNL…ISGL), 244–264 (SLTD…GIGK), 265–288 (LKKL…VGEC), 290–310 (SLTE…SIGK), 311–334 (LKKL…IGGC), 336–356 (SLTV…EVSQ), 357–380 (ATEL…LTAL), and 382–405 (LKAL…TDYT). Thr-480 is modified (phosphothreonine). Residues 484-512 (GELKHMKKTVENLRNDMNAAKGLDSNKNE) adopt a coiled-coil conformation.

As to quaternary structure, interacts with DLG1 and DLG4. May form a complex with DLG1 and ERBIN, where interaction between LRRC1 and ERBIN is indirect. Expressed strongly in testis and placenta, followed by heart, lung, kidney, thyroid, trachea, colon, prostate and pancreas.

It is found in the cytoplasm. Its subcellular location is the membrane. In Homo sapiens (Human), this protein is Leucine-rich repeat-containing protein 1 (LRRC1).